The chain runs to 140 residues: MGPRRRSRKPEAPRRRSPSPTPTPGPSRRGPSLGASSHQHSRRRQGWLKEIRKLQKSTHLLIRKLPFSRLAREICVKFTRGVDFNWQAQALLALQEAAEAFLVHLFEDAYLLTLHAGRVTLFPKDVQLARRIRGLEEGLG.

Positions 1-46 (MGPRRRSRKPEAPRRRSPSPTPTPGPSRRGPSLGASSHQHSRRRQG) are disordered. Glycine 2 is subject to N,N,N-trimethylglycine. At serine 7 the chain carries Phosphoserine; by AURKA and AURKB. Phosphoserine is present on residues serine 17, serine 19, and serine 27. Low complexity predominate over residues 26–37 (PSRRGPSLGASS). An important for flexibility of DNA ends that protrude from nucleosomes region spans residues 39 to 54 (QHSRRRQGWLKEIRKL). Residue serine 68 is modified to Phosphoserine. The segment at 75-116 (CVKFTRGVDFNWQAQALLALQEAAEAFLVHLFEDAYLLTLHA) is CATD.

It belongs to the histone H3 family. As to quaternary structure, component of centromeric nucleosomes, where DNA is wrapped around a histone octamer core. The octamer contains two molecules each of H2A, H2B, CENPA and H4 assembled in one CENPA-H4 heterotetramer and two H2A-H2B heterodimers. CENPA modulates the DNA-binding characteristics of nucleosomes so that protruding DNA ends have higher flexibility than in nucleosomes containing conventional histone H3. Inhibits binding of histone H1 to nucleosomes, since histone H1 binds preferentially to rigid DNA linkers that protrude from nucleosomes. Nucleosomes containing CENPA also contain histone H2A variants such as MACROH2A and H2A.Z/H2AZ1. The CENPA-H4 heterotetramer is more compact and structurally more rigid than corresponding H3-H4 heterotetramers. Can assemble into nucleosomes that contain both CENPA and histone H3.3; these nucleosomes interact with a single CENPC chain. Heterotrimer composed of HJURP, CENPA and histone H4, where HJURP interacts with the dimer formed by CENPA and histone H4 and prevents tetramerization of CENPA and H4. Component of the CENPA-NAC complex, at least composed of CENPA, CENPC, CENPH, CENPM, CENPN, CENPT and CENPU. Interacts (via CATD domain) with HJURP; the interaction is direct and is required for its localization to centromeres. Interacts with CENPC, CENPN and CENPT; interaction is direct. Part of a centromere complex consisting of CENPA, CENPT and CENPW. Identified in centromere complexes containing histones H2A, H2B and H4, and at least CENPA, CENPB, CENPC, CENPT, CENPN, HJURP, SUPT16H, SSRP1 and RSF1. Can self-associate. The CENPA-H4 heterotetramer can bind DNA by itself (in vitro). Interacts with CDK1, PPP1CA and RBBP7. In terms of assembly, (Microbial infection) Interacts directly with herpes virus HHV-1 protein ICP0. In terms of processing, ubiquitinated. Interaction with herpes virus HSV-1 ICP0 protein, leads to its degradation by the proteasome pathway. Post-translationally, trimethylated by NTMT1 at the N-terminal glycine after cleavage of Met-1. Methylation is low before incorporation into nucleosomes and increases with cell cycle progression, with the highest levels in mitotic nucleosomes. Phosphorylated by CDK1 at Ser-68 during early mitosis; this abolishes association with chromatin and centromeres, prevents interaction with HJURP and thereby prevents premature assembly of CENPA into centromeres. Dephosphorylated at Ser-68 by PPP1CA during late mitosis. Phosphorylation of Ser-7 by AURKA and AURKB during prophase is required for localization of AURKA and AURKB at inner centromere and is essential for normal cytokinesis. Initial phosphorylation during prophase is mediated by AURKA and is maintained by AURKB. In terms of processing, poly-ADP-ribosylated by PARP1.

It is found in the nucleus. The protein resides in the chromosome. Its subcellular location is the centromere. In terms of biological role, histone H3-like nucleosomal protein that is specifically found in centromeric nucleosomes. Replaces conventional H3 in the nucleosome core of centromeric chromatin that serves as an assembly site for the inner kinetochore. The presence of CENPA subtly modifies the nucleosome structure and the way DNA is wrapped around the nucleosome and gives rise to protruding DNA ends that are less well-ordered and rigid compared to nucleosomes containing histone H3. May serve as an epigenetic mark that propagates centromere identity through replication and cell division. Required for recruitment and assembly of kinetochore proteins, and as a consequence required for progress through mitosis, chromosome segregation and cytokinesis. This chain is Histone H3-like centromeric protein A (CENPA), found in Homo sapiens (Human).